The sequence spans 334 residues: Phenylalanine--tRNA ligase alpha subunit (334 aa).

Glu-249 provides a ligand contact to Mg(2+).

It belongs to the class-II aminoacyl-tRNA synthetase family. Phe-tRNA synthetase alpha subunit type 1 subfamily. As to quaternary structure, tetramer of two alpha and two beta subunits. It depends on Mg(2+) as a cofactor.

The protein localises to the cytoplasm. It catalyses the reaction tRNA(Phe) + L-phenylalanine + ATP = L-phenylalanyl-tRNA(Phe) + AMP + diphosphate + H(+). The polypeptide is Phenylalanine--tRNA ligase alpha subunit (Desulfosudis oleivorans (strain DSM 6200 / JCM 39069 / Hxd3) (Desulfococcus oleovorans)).